Reading from the N-terminus, the 253-residue chain is Imidazole glycerol phosphate synthase subunit HisF (253 aa).

Active-site residues include Asp-11 and Asp-130.

The protein belongs to the HisA/HisF family. Heterodimer of HisH and HisF.

The protein localises to the cytoplasm. It catalyses the reaction 5-[(5-phospho-1-deoxy-D-ribulos-1-ylimino)methylamino]-1-(5-phospho-beta-D-ribosyl)imidazole-4-carboxamide + L-glutamine = D-erythro-1-(imidazol-4-yl)glycerol 3-phosphate + 5-amino-1-(5-phospho-beta-D-ribosyl)imidazole-4-carboxamide + L-glutamate + H(+). Its pathway is amino-acid biosynthesis; L-histidine biosynthesis; L-histidine from 5-phospho-alpha-D-ribose 1-diphosphate: step 5/9. In terms of biological role, IGPS catalyzes the conversion of PRFAR and glutamine to IGP, AICAR and glutamate. The HisF subunit catalyzes the cyclization activity that produces IGP and AICAR from PRFAR using the ammonia provided by the HisH subunit. The sequence is that of Imidazole glycerol phosphate synthase subunit HisF from Paracoccus denitrificans (strain Pd 1222).